Reading from the N-terminus, the 294-residue chain is 4-hydroxy-tetrahydrodipicolinate synthase (294 aa).

Residue Thr47 coordinates pyruvate. Tyr135 functions as the Proton donor/acceptor in the catalytic mechanism. Catalysis depends on Lys163, which acts as the Schiff-base intermediate with substrate. Thr205 contacts pyruvate.

The protein belongs to the DapA family. Homotetramer; dimer of dimers.

It localises to the cytoplasm. It catalyses the reaction L-aspartate 4-semialdehyde + pyruvate = (2S,4S)-4-hydroxy-2,3,4,5-tetrahydrodipicolinate + H2O + H(+). Its pathway is amino-acid biosynthesis; L-lysine biosynthesis via DAP pathway; (S)-tetrahydrodipicolinate from L-aspartate: step 3/4. Functionally, catalyzes the condensation of (S)-aspartate-beta-semialdehyde [(S)-ASA] and pyruvate to 4-hydroxy-tetrahydrodipicolinate (HTPA). This is 4-hydroxy-tetrahydrodipicolinate synthase from Rickettsia africae (strain ESF-5).